Reading from the N-terminus, the 239-residue chain is Small ribosomal subunit protein uS3 (239 aa).

One can recognise a KH type-2 domain in the interval 39–107 (VRQVLRKKMS…SVHINVIEVR (69 aa)). The segment at 217–239 (KQDDISRGDRNADRSSRRSREVR) is disordered.

This sequence belongs to the universal ribosomal protein uS3 family. Part of the 30S ribosomal subunit. Forms a tight complex with proteins S10 and S14.

Its function is as follows. Binds the lower part of the 30S subunit head. Binds mRNA in the 70S ribosome, positioning it for translation. The chain is Small ribosomal subunit protein uS3 from Xylella fastidiosa (strain 9a5c).